We begin with the raw amino-acid sequence, 957 residues long: Dystrophin-related protein 2 (957 aa).

2 Spectrin repeats span residues 102–179 (DLSG…EELE) and 231–337 (EHLL…QLQD). A WW domain is found at 358–383 (WERAISPNKVPYYINHQAQTTCWDHP). The ZZ-type; degenerate zinc finger occupies 605–661 (KHQTKCSICRQCPIKGFRYRSLKQFNVDICQTCFLTGRASKGNKLHYPIMEYYTPTT). 4 residues coordinate Zn(2+): C610, C613, C634, and C637. S748 carries the phosphoserine modification. Low complexity predominate over residues 876–894 (QPPSESDGNGSAGSSLASS). The segment at 876-923 (QPPSESDGNGSAGSSLASSPRQSEGSHPREKGQTTPDTEVADDVGSKS) is disordered. T910 carries the phosphothreonine modification.

Interacts with PRX; this enhances phosphorylation. Identified in a dystroglycan complex that contains at least PRX, DRP2, UTRN, DMD and DAG1. Detected in quadriceps nerve Schwann cells. Detected in sciatic nerve. Detected in trigeminal nerve Schwann cells (at protein level). Detected in brain and spinal cord.

The protein resides in the postsynaptic density. It is found in the cell projection. Its subcellular location is the dendrite. It localises to the perikaryon. The protein localises to the cell membrane. Functionally, required for normal myelination and for normal organization of the cytoplasm and the formation of Cajal bands in myelinating Schwann cells. Required for normal PRX location at appositions between the abaxonal surface of the myelin sheath and the Schwann cell plasma membrane. Possibly involved in membrane-cytoskeleton interactions of the central nervous system. The polypeptide is Dystrophin-related protein 2 (Drp2) (Mus musculus (Mouse)).